A 633-amino-acid chain; its full sequence is Glutamyl-tRNA(Gln) amidotransferase subunit E (633 aa).

The disordered stretch occupies residues 414 to 437 (ALPDGNTEYMRPLPGKARMYPETD).

This sequence belongs to the GatB/GatE family. GatE subfamily. Heterodimer of GatD and GatE.

The enzyme catalyses L-glutamyl-tRNA(Gln) + L-glutamine + ATP + H2O = L-glutaminyl-tRNA(Gln) + L-glutamate + ADP + phosphate + H(+). Its function is as follows. Allows the formation of correctly charged Gln-tRNA(Gln) through the transamidation of misacylated Glu-tRNA(Gln) in organisms which lack glutaminyl-tRNA synthetase. The reaction takes place in the presence of glutamine and ATP through an activated gamma-phospho-Glu-tRNA(Gln). The GatDE system is specific for glutamate and does not act on aspartate. The polypeptide is Glutamyl-tRNA(Gln) amidotransferase subunit E (Pyrococcus abyssi (strain GE5 / Orsay)).